The primary structure comprises 160 residues: SsrA-binding protein (160 aa).

The disordered stretch occupies residues lysine 132–glutamate 160.

It belongs to the SmpB family.

The protein localises to the cytoplasm. Functionally, required for rescue of stalled ribosomes mediated by trans-translation. Binds to transfer-messenger RNA (tmRNA), required for stable association of tmRNA with ribosomes. tmRNA and SmpB together mimic tRNA shape, replacing the anticodon stem-loop with SmpB. tmRNA is encoded by the ssrA gene; the 2 termini fold to resemble tRNA(Ala) and it encodes a 'tag peptide', a short internal open reading frame. During trans-translation Ala-aminoacylated tmRNA acts like a tRNA, entering the A-site of stalled ribosomes, displacing the stalled mRNA. The ribosome then switches to translate the ORF on the tmRNA; the nascent peptide is terminated with the 'tag peptide' encoded by the tmRNA and targeted for degradation. The ribosome is freed to recommence translation, which seems to be the essential function of trans-translation. In Pseudomonas entomophila (strain L48), this protein is SsrA-binding protein.